We begin with the raw amino-acid sequence, 173 residues long: NEDD4-binding protein 2-like 1 (173 aa).

Positions 1-35 (MEESFLESFGRLSLRQQQPPPPRPPAPPPLRGTPP) are disordered. A compositionally biased stretch (pro residues) spans 18-32 (QPPPPRPPAPPPLRG).

Interacts with dynactin subunit proteins, including DCTN4, DCTN5 and DCTN5.

In terms of biological role, might play a role in adipocyte differentiation and triglyceride accumulation. In Bos taurus (Bovine), this protein is NEDD4-binding protein 2-like 1 (N4BP2L1).